The primary structure comprises 427 residues: Inward rectifier potassium channel 2 (427 aa).

The Cytoplasmic portion of the chain corresponds to 1–81 (MGSVRTNRYS…IFTTCVDIRW (81 aa)). Residues 82-106 (RWMLVIFCLTFILSWLFFGCVFWLI) traverse the membrane as a helical segment. Topologically, residues 107–128 (ALLHGDLENQENNKPCVSQVSS) are extracellular. The helical; Pore-forming intramembrane region spans 129-140 (FTAAFLFSIETQ). An intramembrane region (pore-forming) is located at residues 141-147 (TTIGYGF). The Selectivity filter motif lies at 142–147 (TIGYGF). The Extracellular portion of the chain corresponds to 148–156 (RCVTDECPI). The helical transmembrane segment at 157–178 (AVFMVVFQSIVGCIIDAFIIGA) threads the bilayer. At 179–427 (VMAKMAKPKK…PRPLRRESEI (249 aa)) the chain is on the cytoplasmic side. The tract at residues 181 to 208 (AKMAKPKKRNETLVFSHNAVVAMRDGKL) is polyphosphoinositide (PIP2)-binding. A disordered region spans residues 386 to 427 (EEDEIDTGVPESTSTDTHPDMDHHNQAGVPLEPRPLRRESEI). A PDZ-binding motif is present at residues 425–427 (SEI).

This sequence belongs to the inward rectifier-type potassium channel (TC 1.A.2.1) family. KCNJ2 subfamily. Homotetramer. Homomultimeric and heteromultimeric association with KCNJ4/Kir2.3, resulting in an enhanced G-protein-induced current. Associates, via its PDZ-recognition domain, with a complex containing LIN7A, LIN7B, LIN7C, DLG1, CASK and APBA1. As to expression, found in the apical basilar papilla of the inner ear, brain, muscle, cerebellum, heart and liver.

Its subcellular location is the cell membrane. It is found in the sarcolemma. It localises to the T-tubule. The catalysed reaction is K(+)(in) = K(+)(out). Activated by phosphatidylinositol 4,5 biphosphate (PtdIns(4,5)P2). In terms of biological role, inward rectifier potassium channels are characterized by a greater tendency to allow potassium to flow into the cell rather than out of it. Their voltage dependence is regulated by the concentration of extracellular potassium; as external potassium is raised, the voltage range of the channel opening shifts to more positive voltages. The inward rectification is mainly due to the blockage of outward current by internal magnesium. Can be blocked by external barium. Probably participates in establishing action potential waveform and excitability of neuronal and muscle tissues. In Gallus gallus (Chicken), this protein is Inward rectifier potassium channel 2 (KCNJ2).